The chain runs to 255 residues: Pimeloyl-[acyl-carrier protein] methyl ester esterase (255 aa).

Residues 16–242 (LVLLHGWGMN…SSHAPFITEP (227 aa)) enclose the AB hydrolase-1 domain. Residues tryptophan 22, 82–83 (SL), and 143–147 (FMALQ) contribute to the substrate site. Serine 82 serves as the catalytic Nucleophile. Residues aspartate 207 and histidine 235 contribute to the active site. Residue histidine 235 coordinates substrate.

The protein belongs to the AB hydrolase superfamily. Carboxylesterase BioH family. Monomer.

It is found in the cytoplasm. It carries out the reaction 6-carboxyhexanoyl-[ACP] methyl ester + H2O = 6-carboxyhexanoyl-[ACP] + methanol + H(+). Its pathway is cofactor biosynthesis; biotin biosynthesis. In terms of biological role, the physiological role of BioH is to remove the methyl group introduced by BioC when the pimeloyl moiety is complete. It allows to synthesize pimeloyl-ACP via the fatty acid synthetic pathway through the hydrolysis of the ester bonds of pimeloyl-ACP esters. This chain is Pimeloyl-[acyl-carrier protein] methyl ester esterase, found in Vibrio vulnificus (strain YJ016).